Consider the following 303-residue polypeptide: UDP-N-acetylenolpyruvoylglucosamine reductase (303 aa).

Residues 30 to 196 (IGGPADLLII…LEAVFKLKQD (167 aa)) enclose the FAD-binding PCMH-type domain. Arg174 is an active-site residue. The Proton donor role is filled by Ser225. The active site involves Glu295.

The protein belongs to the MurB family. Requires FAD as cofactor.

It localises to the cytoplasm. The enzyme catalyses UDP-N-acetyl-alpha-D-muramate + NADP(+) = UDP-N-acetyl-3-O-(1-carboxyvinyl)-alpha-D-glucosamine + NADPH + H(+). The protein operates within cell wall biogenesis; peptidoglycan biosynthesis. Its function is as follows. Cell wall formation. In Bacillus pumilus (strain SAFR-032), this protein is UDP-N-acetylenolpyruvoylglucosamine reductase.